A 69-amino-acid polypeptide reads, in one-letter code: Large ribosomal subunit protein bL31 (69 aa).

Residues C16, C18, C37, and C40 each coordinate Zn(2+).

It belongs to the bacterial ribosomal protein bL31 family. Type A subfamily. Part of the 50S ribosomal subunit. The cofactor is Zn(2+).

Its function is as follows. Binds the 23S rRNA. The polypeptide is Large ribosomal subunit protein bL31 (Buchnera aphidicola subsp. Cinara cedri (strain Cc)).